The following is a 457-amino-acid chain: Cysteine--tRNA ligase (457 aa).

Cys30 is a binding site for Zn(2+). The short motif at 32 to 42 (PTVYDRAHLGN) is the 'HIGH' region element. 3 residues coordinate Zn(2+): Cys213, His238, and Glu242. The short motif at 271–275 (KMSKS) is the 'KMSKS' region element. Lys274 serves as a coordination point for ATP.

This sequence belongs to the class-I aminoacyl-tRNA synthetase family. Monomer. The cofactor is Zn(2+).

Its subcellular location is the cytoplasm. The catalysed reaction is tRNA(Cys) + L-cysteine + ATP = L-cysteinyl-tRNA(Cys) + AMP + diphosphate. The polypeptide is Cysteine--tRNA ligase (Ruegeria sp. (strain TM1040) (Silicibacter sp.)).